The primary structure comprises 77 residues: Small ribosomal subunit protein uS17 (77 aa).

The protein belongs to the universal ribosomal protein uS17 family. In terms of assembly, part of the 30S ribosomal subunit.

One of the primary rRNA binding proteins, it binds specifically to the 5'-end of 16S ribosomal RNA. The chain is Small ribosomal subunit protein uS17 from Rickettsia conorii (strain ATCC VR-613 / Malish 7).